A 112-amino-acid polypeptide reads, in one-letter code: UPF0212 protein Mpal_1084 (112 aa).

Belongs to the UPF0212 family.

The protein is UPF0212 protein Mpal_1084 of Methanosphaerula palustris (strain ATCC BAA-1556 / DSM 19958 / E1-9c).